A 278-amino-acid chain; its full sequence is MTQMNFTDRATRVAIIANGKYQSKRVASKLFAAFKHDPDFYLSKKDPDIVISIGGDGMLLSAFHMYEKQLDKVRFVGVHTGHLGFYTDYRDFEVDTLINNLKNDEGEQISYPILKVTITLEDGRVIRARALNESTIKRIEKTMVADVVINQVVFERFRGDGILVSTPTGSTAYNKSLGGAVLHPTIEALQLTEISSLNNRVYRTLGSSVIIPKKDAIEIVPKRVGVYTISIDNKTVHYKNVTKIEYSIDEKSINFVSTPSHTSFWERVNDAFIGEPEH.

D56 serves as the catalytic Proton acceptor. Residues 56 to 57 (DG), 132 to 133 (NE), R158, D160, and 171 to 176 (TAYNKS) each bind NAD(+).

Belongs to the NAD kinase family. A divalent metal cation serves as cofactor.

Its subcellular location is the cytoplasm. It carries out the reaction NAD(+) + ATP = ADP + NADP(+) + H(+). Functionally, involved in the regulation of the intracellular balance of NAD and NADP, and is a key enzyme in the biosynthesis of NADP. Catalyzes specifically the phosphorylation on 2'-hydroxyl of the adenosine moiety of NAD to yield NADP. The chain is NAD kinase from Streptococcus agalactiae serotype III (strain NEM316).